A 255-amino-acid polypeptide reads, in one-letter code: Small ribosomal subunit protein eS1 (255 aa).

Basic residues predominate over residues 1 to 18 (MAVGKNKRLSKGKKGLKK). The tract at residues 1-28 (MAVGKNKRLSKGKKGLKKRTQDPFSRKD) is disordered. Alanine 2 bears the N-acetylalanine; partial mark. Positions 19-28 (RTQDPFSRKD) are enriched in basic and acidic residues.

The protein belongs to the eukaryotic ribosomal protein eS1 family. As to quaternary structure, component of the small ribosomal subunit. Mature ribosomes consist of a small (40S) and a large (60S) subunit. The 40S subunit contains about 33 different proteins and 1 molecule of RNA (18S). The 60S subunit contains about 49 different proteins and 3 molecules of RNA (25S, 5.8S and 5S).

The protein localises to the cytoplasm. In Ajellomyces capsulatus (strain NAm1 / WU24) (Darling's disease fungus), this protein is Small ribosomal subunit protein eS1.